The primary structure comprises 389 residues: Sulfate adenylyltransferase (389 aa).

It belongs to the sulfate adenylyltransferase family.

It carries out the reaction sulfate + ATP + H(+) = adenosine 5'-phosphosulfate + diphosphate. It functions in the pathway sulfur metabolism; hydrogen sulfide biosynthesis; sulfite from sulfate: step 1/3. This Deinococcus deserti (strain DSM 17065 / CIP 109153 / LMG 22923 / VCD115) protein is Sulfate adenylyltransferase.